The following is a 294-amino-acid chain: MIRGSIVALVTPMRADGSVDWERLRSLVNWHVEQGTHAIVAVGTTGESATLGFEEHDSVIREVVALAKGRLPVIAGTGANNTEEAIRLTRDAKRDGADACLLVTPYYNKPPQEGLYQHFLAIARAVDIPQILYNVPGRTSCDLLPETVERLSKVPNIVGIKEATGNLERAREIRERCSDDFMLYSGDDATAMDFILAGGHGDISVTANVAPAKMAAMCEAALAGDADTARALNAELEPLHRDLFIEANPIPVKWALFEMGLIDAGIRLPLVPMSEAAQPRLRETMRQCGLLEVK.

Pyruvate is bound at residue T45. Y133 (proton donor/acceptor) is an active-site residue. K161 serves as the catalytic Schiff-base intermediate with substrate. Residue I203 participates in pyruvate binding.

The protein belongs to the DapA family. Homotetramer; dimer of dimers.

Its subcellular location is the cytoplasm. It carries out the reaction L-aspartate 4-semialdehyde + pyruvate = (2S,4S)-4-hydroxy-2,3,4,5-tetrahydrodipicolinate + H2O + H(+). It functions in the pathway amino-acid biosynthesis; L-lysine biosynthesis via DAP pathway; (S)-tetrahydrodipicolinate from L-aspartate: step 3/4. In terms of biological role, catalyzes the condensation of (S)-aspartate-beta-semialdehyde [(S)-ASA] and pyruvate to 4-hydroxy-tetrahydrodipicolinate (HTPA). This is 4-hydroxy-tetrahydrodipicolinate synthase from Alcanivorax borkumensis (strain ATCC 700651 / DSM 11573 / NCIMB 13689 / SK2).